The primary structure comprises 61 residues: U-scoloptoxin(14)-Sm1a (61 aa).

Residues 1–24 form the signal peptide; the sequence is MNPKLCMLLLVCLMAFYVIETVQA.

It belongs to the scoloptoxin-14 family. In terms of processing, contains 4 disulfide bonds. As to expression, expressed by the venom gland.

It is found in the secreted. This Scolopendra morsitans (Tanzanian blue ringleg centipede) protein is U-scoloptoxin(14)-Sm1a.